Consider the following 273-residue polypeptide: XIAP-associated factor 1 (273 aa).

The TRAF-type zinc finger occupies 22 to 80 (LHEAHCLRFIVLCPECEEPIPESKMKEHMEVVHQQTKESQQHPAKCKFCELAVQLSNLD). Positions 181–228 (GNRRSTVSKDVRPKTKNRNSSTKRETKKQNGTVALPLKSGLQQRADLP) are disordered.

In terms of assembly, interacts with BIRC1, BIRC2, BIRC3, BIRC4, BIRC7 and BIRC8. Part of an complex consisting of BIRC4, XAF1 and BIRC5; the complex formation requires IFN-beta stimulation. Interacts with RNF114, the interaction increases XAF1 stability and proapoptotic effects, and may regulate IFN signaling.

The protein resides in the cytoplasm. It is found in the nucleus. It localises to the mitochondrion. In terms of biological role, seems to function as a negative regulator of members of the IAP (inhibitor of apoptosis protein) family. Inhibits anti-caspase activity of BIRC4. Induces cleavage and inactivation of BIRC4 independent of caspase activation. Mediates TNF-alpha-induced apoptosis and is involved in apoptosis in trophoblast cells. May inhibit BIRC4 indirectly by activating the mitochondrial apoptosis pathway. After translocation to mitochondria, promotes translocation of BAX to mitochondria and cytochrome c release from mitochondria. Seems to promote the redistribution of BIRC4 from the cytoplasm to the nucleus, probably independent of BIRC4 inactivation which seems to occur in the cytoplasm. The BIRC4-XAF1 complex mediates down-regulation of BIRC5/survivin; the process requires the E3 ligase activity of BIRC4. Seems to be involved in cellular sensitivity to the proapoptotic actions of TRAIL. May be a tumor suppressor by mediating apoptosis resistance of cancer cells. In Mus musculus (Mouse), this protein is XIAP-associated factor 1 (Xaf1).